The following is a 104-amino-acid chain: Pyrimidine/purine nucleoside phosphorylase (104 aa).

This sequence belongs to the nucleoside phosphorylase PpnP family.

It catalyses the reaction a purine D-ribonucleoside + phosphate = a purine nucleobase + alpha-D-ribose 1-phosphate. The enzyme catalyses adenosine + phosphate = alpha-D-ribose 1-phosphate + adenine. It carries out the reaction cytidine + phosphate = cytosine + alpha-D-ribose 1-phosphate. The catalysed reaction is guanosine + phosphate = alpha-D-ribose 1-phosphate + guanine. It catalyses the reaction inosine + phosphate = alpha-D-ribose 1-phosphate + hypoxanthine. The enzyme catalyses thymidine + phosphate = 2-deoxy-alpha-D-ribose 1-phosphate + thymine. It carries out the reaction uridine + phosphate = alpha-D-ribose 1-phosphate + uracil. The catalysed reaction is xanthosine + phosphate = alpha-D-ribose 1-phosphate + xanthine. Catalyzes the phosphorolysis of diverse nucleosides, yielding D-ribose 1-phosphate and the respective free bases. Can use uridine, adenosine, guanosine, cytidine, thymidine, inosine and xanthosine as substrates. Also catalyzes the reverse reactions. The chain is Pyrimidine/purine nucleoside phosphorylase from Thiobacillus denitrificans (strain ATCC 25259 / T1).